We begin with the raw amino-acid sequence, 418 residues long: Phospho-N-acetylmuramoyl-pentapeptide-transferase (418 aa).

Transmembrane regions (helical) follow at residues 22 to 42 (YISF…VLIG), 72 to 92 (TPTM…LLLA), 95 to 115 (SNIY…LGLI), 135 to 155 (IIAQ…SPNI), 208 to 228 (AATW…VSNG), 244 to 264 (AIIG…GFAA), 277 to 297 (LTVF…HNAF), 302 to 322 (FMGD…AIII), 326 to 346 (LLLP…MIQV), and 395 to 415 (KIVV…VVTL).

It belongs to the glycosyltransferase 4 family. MraY subfamily. The cofactor is Mg(2+).

It localises to the cell inner membrane. The enzyme catalyses UDP-N-acetyl-alpha-D-muramoyl-L-alanyl-gamma-D-glutamyl-meso-2,6-diaminopimeloyl-D-alanyl-D-alanine + di-trans,octa-cis-undecaprenyl phosphate = di-trans,octa-cis-undecaprenyl diphospho-N-acetyl-alpha-D-muramoyl-L-alanyl-D-glutamyl-meso-2,6-diaminopimeloyl-D-alanyl-D-alanine + UMP. Its pathway is cell wall biogenesis; peptidoglycan biosynthesis. In terms of biological role, catalyzes the initial step of the lipid cycle reactions in the biosynthesis of the cell wall peptidoglycan: transfers peptidoglycan precursor phospho-MurNAc-pentapeptide from UDP-MurNAc-pentapeptide onto the lipid carrier undecaprenyl phosphate, yielding undecaprenyl-pyrophosphoryl-MurNAc-pentapeptide, known as lipid I. The chain is Phospho-N-acetylmuramoyl-pentapeptide-transferase from Azobacteroides pseudotrichonymphae genomovar. CFP2.